Consider the following 165-residue polypeptide: Choriogonadotropin subunit beta 3 (165 aa).

Residues 1 to 20 (MEMFQGLLLLLLLSMGGTWA) form the signal peptide. 6 cysteine pairs are disulfide-bonded: Cys-29-Cys-77, Cys-43-Cys-92, Cys-46-Cys-130, Cys-54-Cys-108, Cys-58-Cys-110, and Cys-113-Cys-120. Residues Asn-33 and Asn-50 are each glycosylated (N-linked (GlcNAc...) asparagine). The tract at residues 131 to 165 (DDPRFQDSSSSKAPPPSLPSPSRLPGPSDTPILPQ) is disordered. Ser-141, Ser-147, Ser-152, and Ser-158 each carry an O-linked (GalNAc...) serine glycan. Positions 143–154 (APPPSLPSPSRL) are enriched in pro residues.

It belongs to the glycoprotein hormones subunit beta family. Heterodimer of a common alpha chain identical in LH, FSH, TSH and HCG and a unique beta chain distinct in each of the hormones. As to expression, high expression in the placenta throughout pregnancy.

Its subcellular location is the secreted. Beta subunit of the human chorionic gonadotropin (hCG). hCG is a complex glycoprotein composed of two glycosylated subunits alpha and beta which are non-covalently associated. The alpha subunit is identical to those in the pituitary gonadotropin hormones (LH, FSH and TSH). The beta subunits are distinct in each of the hormones and confer receptor and biological specificity. Has an essential role in pregnancy and maternal adaptation. Stimulates the ovaries to synthesize the steroids that are essential for the maintenance of pregnancy. The chain is Choriogonadotropin subunit beta 3 (CGB3) from Homo sapiens (Human).